Reading from the N-terminus, the 254-residue chain is Dolichol-phosphate mannosyltransferase subunit 1 (254 aa).

Positions 25, 27, 29, 56, 58, 111, 112, 113, 140, and 227 each coordinate GDP-alpha-D-mannose. Aspartate 113 serves as a coordination point for Mg(2+). Residue aspartate 113 participates in Mn(2+) binding.

Belongs to the glycosyltransferase 2 family. As to quaternary structure, component of the dolichol-phosphate mannose (DPM) synthase complex composed of dpm1, dpm2 and dpm3. Mg(2+) is required as a cofactor. The cofactor is Mn(2+). Requires Ca(2+) as cofactor.

Its subcellular location is the endoplasmic reticulum. The catalysed reaction is a di-trans,poly-cis-dolichyl phosphate + GDP-alpha-D-mannose = a di-trans,poly-cis-dolichyl beta-D-mannosyl phosphate + GDP. It participates in protein modification; protein glycosylation. Transfers mannose from GDP-mannose to dolichol monophosphate to form dolichol phosphate mannose (Dol-P-Man) which is the mannosyl donor in pathways leading to N-glycosylation, glycosyl phosphatidylinositol membrane anchoring, and O-mannosylation of proteins; catalytic subunit of the dolichol-phosphate mannose (DPM) synthase complex. The polypeptide is Dolichol-phosphate mannosyltransferase subunit 1 (dpm1) (Dictyostelium discoideum (Social amoeba)).